The primary structure comprises 610 residues: Anthocyanin regulatory Lc protein (610 aa).

2 disordered regions span residues 402-422 and 468-524; these read ATGAAQEMSGTGTKNHVMSER and LESS…PVLT. Residues 412–461 form the bHLH domain; that stretch reads TGTKNHVMSERKRREKLNEMFLVLKSLLPSIHRVNKASILAETIAYLKEL. The segment covering 481–495 has biased composition (polar residues); the sequence is TTTRLITRPSRGNNE. Over residues 508–519 the composition is skewed to basic and acidic residues; it reads KSPELGRDDVER.

The protein belongs to the bHLH protein family. As to quaternary structure, efficient DNA binding requires dimerization with another bHLH protein.

The protein localises to the nucleus. Functionally, putative transcriptional activator. Controls tissue-specific synthesis of anthocyanin pigments in various parts of the maize plant. In Zea mays (Maize), this protein is Anthocyanin regulatory Lc protein (LC).